Reading from the N-terminus, the 225-residue chain is Large ribosomal subunit protein uL4 (225 aa).

Residues 46–102 (KRQGTHATKGRGEVRGGGRKPFRQKGTGRARQGSIRAPHFTGGGTVHGPQPRDYSQR) form a disordered region. The span at 62 to 73 (GGRKPFRQKGTG) shows a compositional bias: basic residues.

This sequence belongs to the universal ribosomal protein uL4 family. Part of the 50S ribosomal subunit.

Functionally, one of the primary rRNA binding proteins, this protein initially binds near the 5'-end of the 23S rRNA. It is important during the early stages of 50S assembly. It makes multiple contacts with different domains of the 23S rRNA in the assembled 50S subunit and ribosome. Its function is as follows. Forms part of the polypeptide exit tunnel. The sequence is that of Large ribosomal subunit protein uL4 from Corynebacterium urealyticum (strain ATCC 43042 / DSM 7109).